A 720-amino-acid polypeptide reads, in one-letter code: GTPase-activating protein gyp2 (720 aa).

The region spanning leucine 20–asparagine 85 is the GRAM domain. In terms of domain architecture, Rab-GAP TBC spans glycine 216–glycine 404.

It localises to the cytoplasm. Its subcellular location is the nucleus. Functionally, stimulates specifically the GTPase activity of ypt2 and ryh1. Inactivates ryh1 during recycling between the endosome and the Golgi compartments. The polypeptide is GTPase-activating protein gyp2 (Schizosaccharomyces pombe (strain 972 / ATCC 24843) (Fission yeast)).